Reading from the N-terminus, the 236-residue chain is Orotidine 5'-phosphate decarboxylase (236 aa).

Substrate-binding positions include D17, K39, D66–T75, T125, R186, Q195, G215, and R216. K68 acts as the Proton donor in catalysis.

The protein belongs to the OMP decarboxylase family. Type 1 subfamily. In terms of assembly, homodimer.

It catalyses the reaction orotidine 5'-phosphate + H(+) = UMP + CO2. The protein operates within pyrimidine metabolism; UMP biosynthesis via de novo pathway; UMP from orotate: step 2/2. In terms of biological role, catalyzes the decarboxylation of orotidine 5'-monophosphate (OMP) to uridine 5'-monophosphate (UMP). In Buchnera aphidicola subsp. Acyrthosiphon pisum (strain 5A), this protein is Orotidine 5'-phosphate decarboxylase.